A 711-amino-acid chain; its full sequence is Amino-acid racemase (711 aa).

The Cytoplasmic segment spans residues 1–14 (MTKNESYSGIDYFR). Residues 15–35 (FIAALLIVAIHTSPLFSFSET) traverse the membrane as a helical segment. Residues 36-37 (GN) lie on the Extracellular side of the membrane. Residues 38 to 58 (FIFTRIVAPVAVPFFFMTSGF) traverse the membrane as a helical segment. The Cytoplasmic portion of the chain corresponds to 59 to 78 (FLISRYTCNAEKLGAFIKKT). A helical transmembrane segment spans residues 79–99 (TLIYGVAILLYIPINVYNGYF). Over 100–117 (KMDNLLPNIIKDIVFDGT) the chain is Extracellular. Residues 118–138 (LYHLWYLPASIIGAAIAWYLV) traverse the membrane as a helical segment. Topologically, residues 139-146 (KKVHYRKA) are cytoplasmic. The chain crosses the membrane as a helical span at residues 147 to 167 (FLIASILYIIGLFGDSYYGIV). The Extracellular portion of the chain corresponds to 168 to 188 (KSVSCLNVFYNLIFQLTDYTR). A helical transmembrane segment spans residues 189–209 (NGIFFAPIFFVLGGYISDSPN). Residues 210 to 241 (RYRKKNYIRIYSLFCLMFGKTLTLQHFDIQKH) lie on the Cytoplasmic side of the membrane. Residues 242-262 (DSMYVLLLPSVWCLFNLLLHF) traverse the membrane as a helical segment. Residues 263–306 (RGKRRTGLRTISLDQLYHSSVYDCCNTIVCAELLHLQSLLVENS) are Extracellular-facing. A helical membrane pass occupies residues 307 to 327 (LVHYIAVCFASVVLAVVITAL). Residues 328–711 (LSSLKPKKAK…EHRLNIIRRA (384 aa)) are Cytoplasmic-facing. Residues 336–711 (AKHTADTDRA…EHRLNIIRRA (376 aa)) form a racemase region. Lys-376 functions as the Proton acceptor in the catalytic mechanism. Residue Lys-376 is modified to N6-(pyridoxal phosphate)lysine. Substrate is bound at residue Arg-470. The Proton acceptor role is filled by Tyr-602. Met-651 contributes to the substrate binding site.

In the N-terminal section; belongs to the acyltransferase 3 family. It in the C-terminal section; belongs to the alanine racemase family. Pyridoxal 5'-phosphate is required as a cofactor.

Its subcellular location is the cell membrane. The chain is Amino-acid racemase (vanTG) from Enterococcus faecalis (Streptococcus faecalis).